Here is a 350-residue protein sequence, read N- to C-terminus: Cytochrome c biogenesis protein CcsA (350 aa).

Transmembrane regions (helical) follow at residues 23 to 43 (NVAF…AAFP), 47 to 67 (LLAE…AALL), 82 to 102 (LYES…LALH), 108 to 128 (WVGV…ALVL), 153 to 173 (VMLL…SFLI), 258 to 278 (LIGL…VWAN), 293 to 313 (WALI…TKGW), and 319 to 339 (ALLA…VNFL).

It belongs to the CcmF/CycK/Ccl1/NrfE/CcsA family. In terms of assembly, may interact with ccs1.

The protein localises to the cellular thylakoid membrane. Its function is as follows. Required during biogenesis of c-type cytochromes (cytochrome c6 and cytochrome f) at the step of heme attachment. The chain is Cytochrome c biogenesis protein CcsA from Synechococcus sp. (strain JA-2-3B'a(2-13)) (Cyanobacteria bacterium Yellowstone B-Prime).